Here is a 506-residue protein sequence, read N- to C-terminus: Abscisic acid 8'-hydroxylase 2 (506 aa).

Residues 3 to 23 form a helical membrane-spanning segment; sequence FLLFFVFVTAAVLCFVVPAFL. Cysteine 437 contributes to the heme binding site.

The protein belongs to the cytochrome P450 family. It depends on heme as a cofactor. As to expression, in internodes and expanding leaves. Weak expression in seedlings.

The protein resides in the membrane. The catalysed reaction is 2-cis-(+)-abscisate + reduced [NADPH--hemoprotein reductase] + O2 = (+)-8'-hydroxyabscisate + oxidized [NADPH--hemoprotein reductase] + H2O + H(+). It functions in the pathway plant hormone degradation; abscisic acid degradation. In terms of biological role, involved in the oxidative degradation of abscisic acid. This is Abscisic acid 8'-hydroxylase 2 (CYP707A6) from Oryza sativa subsp. indica (Rice).